The sequence spans 113 residues: MICLKILRFYQKFLSPLKPAACRYYPSCSEYALWQFQKKNFFLAFFSTFFRILRCNPFFKGGFDYPRVSKNFYPINLCFKPIFLAKKQLCFLYIPYKNKSFYLIKIIFKRTNQ.

This sequence belongs to the UPF0161 family.

It is found in the cell inner membrane. Functionally, could be involved in insertion of integral membrane proteins into the membrane. In Campylobacter jejuni subsp. jejuni serotype O:23/36 (strain 81-176), this protein is Putative membrane protein insertion efficiency factor.